The sequence spans 167 residues: Small ribosomal subunit protein uS9 (167 aa).

The segment at 1-41 is disordered; it reads MNTEAVAPDVAEEEVLTSYTSESSASADDAPKKERPALTVS. Positions 17 to 26 are enriched in polar residues; it reads TSYTSESSAS.

This sequence belongs to the universal ribosomal protein uS9 family.

This chain is Small ribosomal subunit protein uS9, found in Renibacterium salmoninarum (strain ATCC 33209 / DSM 20767 / JCM 11484 / NBRC 15589 / NCIMB 2235).